The primary structure comprises 193 residues: MAFIISIIIAYLLGSLSFAVIVAKLMKLPDPRTTGSGNAGATNMLRVGGRQAAFYVLLGDAAKGLIAVLIARFLNVQGVSLAFVGLVAVLGHLFPVYFKFRGGKGVATMMGVLLGLSFWIGLFVIATWVIVVSIFRYSSVAALVSAVAAPIYTIIAGRTDYLFPVLIIAILIIWKHWENFQRLRKGTEDKVKL.

5 consecutive transmembrane segments (helical) span residues 2–22 (AFIISIIIAYLLGSLSFAVIV), 51–71 (QAAFYVLLGDAAKGLIAVLIA), 78–98 (GVSLAFVGLVAVLGHLFPVYF), 112–132 (VLLGLSFWIGLFVIATWVIVV), and 154–174 (IIAGRTDYLFPVLIIAILIIW).

The protein belongs to the PlsY family. Probably interacts with PlsX.

Its subcellular location is the cell inner membrane. The catalysed reaction is an acyl phosphate + sn-glycerol 3-phosphate = a 1-acyl-sn-glycero-3-phosphate + phosphate. Its pathway is lipid metabolism; phospholipid metabolism. Catalyzes the transfer of an acyl group from acyl-phosphate (acyl-PO(4)) to glycerol-3-phosphate (G3P) to form lysophosphatidic acid (LPA). This enzyme utilizes acyl-phosphate as fatty acyl donor, but not acyl-CoA or acyl-ACP. The sequence is that of Glycerol-3-phosphate acyltransferase from Coxiella burnetii (strain CbuK_Q154) (Coxiella burnetii (strain Q154)).